The primary structure comprises 444 residues: UPF0761 membrane protein RC1_0578 (444 aa).

6 helical membrane-spanning segments follow: residues 49-69 (LLALVPLLTVTFAIFSAFPAY), 103-123 (AAALTGFGVIGLSLTSILLFF), 145-165 (LLSFWAVLTIMPLLLGASLSV), 186-206 (FMLPGLLEAAAFTLMFLMIPN), 219-239 (IAAALLMEVSKVGFGLYIAAF), and 248-268 (ALSVIPIFLFWLYTVWSVVLF). The interval 423–444 (SGQPSGQVETAVRQRTGLQGRI) is disordered.

The protein belongs to the UPF0761 family.

It localises to the cell inner membrane. The polypeptide is UPF0761 membrane protein RC1_0578 (Rhodospirillum centenum (strain ATCC 51521 / SW)).